Here is a 457-residue protein sequence, read N- to C-terminus: Peptidyl-prolyl cis-trans isomerase FKBP5 (457 aa).

The residue at position 1 (M1) is an N-acetylmethionine. The disordered stretch occupies residues 1–26 (MTTDEGAKNSGESPTATVAEQGEDIT). S13 bears the Phosphoserine mark. The residue at position 28 (K28) is an N6-acetyllysine. Residues 50-138 (GDKVYVHYKG…FFEIELLDFK (89 aa)) enclose the PPIase FKBP-type 1 domain. An N6-acetyllysine modification is found at K155. Positions 165-251 (GATVEIHLEG…IYEVTLKSFE (87 aa)) constitute a PPIase FKBP-type 2 domain. TPR repeat units lie at residues 268 to 301 (AAIVKEKGTVYFKGGKYMRAVIQYGKIVSWLEME), 317 to 350 (LAAFLNLAMCYLKLREYTKAVECCDKALGLDSAN), and 351 to 384 (EKGLYRRGEAQLLMNEFESAKGDFEKVLEVNPQN). Residues 421–457 (AKEEANKAMGKKTSEGVTNEKGTDSSAVEEEKAEGHV) form a disordered region. S445 carries the phosphoserine modification.

In terms of assembly, part of a heteromultimeric cytoplasmic complex with HSP90AA1, HSPA1A/HSPA1B and steroid receptors. Upon ligand binding dissociates from the complex and FKBP4 takes its place. Interacts with functionally mature heterooligomeric progesterone receptor complexes along with HSP90 and TEBP. Interacts with NR3C1. Interacts with Akt/AKT1 and PHLPP1; enhancing dephosphorylation and subsequent activation of Akt/AKT1. Interacts with IFI44L; this interaction modulates the kinase activity of IKBKB and IKBKE. Interacts with IKBKB and IKBKE. In terms of processing, acetylation impairs ability to promote interaction between Akt/AKT1 and PHLPP1. Deacetylation by SIRT7 promotes interaction between Akt/AKT1 and PHLPP1, leading to suppress Akt/AKT1 activation. Ubiquitinated, leading to degradation in a proteasome-dependent manner. Deubiquitinated by USP49, leading to stabilization.

Its subcellular location is the cytoplasm. It localises to the nucleus. The enzyme catalyses [protein]-peptidylproline (omega=180) = [protein]-peptidylproline (omega=0). Inhibited by both FK506 and rapamycin. Functionally, immunophilin protein with PPIase and co-chaperone activities. Component of unligated steroid receptors heterocomplexes through interaction with heat-shock protein 90 (HSP90). Plays a role in the intracellular trafficking of heterooligomeric forms of steroid hormone receptors maintaining the complex into the cytoplasm when unliganded. Acts as a regulator of Akt/AKT1 activity by promoting the interaction between Akt/AKT1 and PHLPP1, thereby enhancing dephosphorylation and subsequent activation of Akt/AKT1. Interacts with IKBKE and IKBKB which facilitates IKK complex assembly leading to increased IKBKE and IKBKB kinase activity, NF-kappaB activation, and IFN production. This chain is Peptidyl-prolyl cis-trans isomerase FKBP5 (FKBP5), found in Chlorocebus aethiops (Green monkey).